Reading from the N-terminus, the 318-residue chain is Retinol dehydrogenase 5 (318 aa).

Residues Met1 to Ser23 form a helical membrane-spanning segment. Residues Leu24–Lys288 lie on the Lumenal side of the membrane. Position 32–56 (Phe32–Leu56) interacts with NADP(+). Ser163 is a substrate binding site. The Proton acceptor role is filled by Tyr175. A helical transmembrane segment spans residues Leu289–Ile309. At Leu310–Ser318 the chain is on the cytoplasmic side.

This sequence belongs to the short-chain dehydrogenases/reductases (SDR) family. In terms of assembly, homodimer. In terms of tissue distribution, expressed in eye, liver, kidney, brain, intestine, placenta, epididymus and submaxillary gland. In eye, strongly expressed in the retinal pigment epithelium, with lower expression levels detected in the inner segment of the photoreceptor cells and in the outer plexiform layer. In kidney, strong expression detected in the distal tubules and the transitional epithelium in the renal pelvis, with weaker expression detected in the epithelium of the outer stripe of the outer zone of the medulla. In liver, detected in hepatocytes in the centrilobular area. In lung, present in club cells in the epithelium of the bronchiole, in parenchyma and in cartilage surrounding the secondary bronchi. In skin, expressed in epidermis, hair follicles and mast cells in the dermis. Expressed in heart. Not detected in heart. Not detected in lung, spleen, skeletal muscle and testis.

It is found in the endoplasmic reticulum membrane. The catalysed reaction is 11-cis-retinol + NAD(+) = 11-cis-retinal + NADH + H(+). It carries out the reaction 9-cis-retinol + NAD(+) = 9-cis-retinal + NADH + H(+). It catalyses the reaction 13-cis-retinol + NAD(+) = 13-cis-retinal + NADH + H(+). The enzyme catalyses androsterone + NAD(+) = 5alpha-androstan-3,17-dione + NADH + H(+). The catalysed reaction is 5alpha-androstane-3alpha,17beta-diol + NAD(+) = 17beta-hydroxy-5alpha-androstan-3-one + NADH + H(+). Its pathway is cofactor metabolism; retinol metabolism. Its activity is regulated as follows. Inhibited by 9-cis-, 13-cis- and all-trans-retinoic acids, with the most potent inhibitor being 13-cis-retinoic acid. Weakly inhibited by oleic acid. In terms of biological role, catalyzes the oxidation of cis-isomers of retinol, including 11-cis-, 9-cis-, and 13-cis-retinol in an NAD-dependent manner. Has no activity towards all-trans retinal. Plays a significant role in 11-cis retinol oxidation in the retinal pigment epithelium cells (RPE). Also recognizes steroids (androsterone, androstanediol) as its substrates. In Mus musculus (Mouse), this protein is Retinol dehydrogenase 5.